We begin with the raw amino-acid sequence, 475 residues long: Ribulose bisphosphate carboxylase large chain (475 aa).

Positions 1-2 (MS) are excised as a propeptide. Residue Pro-3 is modified to N-acetylproline. Lys-14 bears the N6,N6,N6-trimethyllysine mark. Residues Asn-123 and Thr-173 each coordinate substrate. The Proton acceptor role is filled by Lys-175. Lys-177 contributes to the substrate binding site. 3 residues coordinate Mg(2+): Lys-201, Asp-203, and Glu-204. Position 201 is an N6-carboxylysine (Lys-201). His-294 acts as the Proton acceptor in catalysis. Positions 295, 327, and 379 each coordinate substrate.

It belongs to the RuBisCO large chain family. Type I subfamily. In terms of assembly, heterohexadecamer of 8 large chains and 8 small chains; disulfide-linked. The disulfide link is formed within the large subunit homodimers. Requires Mg(2+) as cofactor. Post-translationally, the disulfide bond which can form in the large chain dimeric partners within the hexadecamer appears to be associated with oxidative stress and protein turnover.

The protein resides in the plastid. It is found in the chloroplast. It catalyses the reaction 2 (2R)-3-phosphoglycerate + 2 H(+) = D-ribulose 1,5-bisphosphate + CO2 + H2O. The enzyme catalyses D-ribulose 1,5-bisphosphate + O2 = 2-phosphoglycolate + (2R)-3-phosphoglycerate + 2 H(+). Functionally, ruBisCO catalyzes two reactions: the carboxylation of D-ribulose 1,5-bisphosphate, the primary event in carbon dioxide fixation, as well as the oxidative fragmentation of the pentose substrate in the photorespiration process. Both reactions occur simultaneously and in competition at the same active site. The polypeptide is Ribulose bisphosphate carboxylase large chain (Castanea sativa (Sweet chestnut)).